The sequence spans 784 residues: Protein Skeletor, isoforms B/C (784 aa).

An N-terminal signal peptide occupies residues 1–28 (MLAMKDKPWLLLFGLLAALSCLASFGDA). DM13 domains follow at residues 34-143 (GTKI…VSIP) and 151-258 (PQKI…VRLP). A DOMON domain is found at 287 to 419 (LAFEVRWAVA…GAESVVWAIG (133 aa)). The interval 451 to 491 (PLPEGARGNSNSSEQEDSAPAAQSSTGGAGYPPAGRPNVEP) is disordered.

In terms of assembly, interacts with Chro and Mgtor as part of a macromolecular complex forming the spindle matrix. Chro colocalizes with Skeletor (Skel) on the chromosomes at interphase and on spindle during metaphase.

The protein localises to the cytoplasm. Its subcellular location is the cytoskeleton. The protein resides in the spindle. It is found in the nucleus. It localises to the nucleolus. The protein localises to the chromosome. Its function is as follows. Provides structural support to stabilize and organize the microtubule spindle during mitosis (within embryonic somatic cells) and meiosis (within spermatocytes). The role in mitosis regulation depends on the Ran pathway. The protein is Protein Skeletor, isoforms B/C of Drosophila melanogaster (Fruit fly).